A 365-amino-acid polypeptide reads, in one-letter code: Flagellar P-ring protein (365 aa).

The first 19 residues, 1–19 (MIKFLSTFMLLLVTTVVQA), serve as a signal peptide directing secretion.

The protein belongs to the FlgI family. In terms of assembly, the basal body constitutes a major portion of the flagellar organelle and consists of four rings (L,P,S, and M) mounted on a central rod.

The protein localises to the periplasm. The protein resides in the bacterial flagellum basal body. In terms of biological role, assembles around the rod to form the L-ring and probably protects the motor/basal body from shearing forces during rotation. This is Flagellar P-ring protein from Escherichia fergusonii (strain ATCC 35469 / DSM 13698 / CCUG 18766 / IAM 14443 / JCM 21226 / LMG 7866 / NBRC 102419 / NCTC 12128 / CDC 0568-73).